Reading from the N-terminus, the 288-residue chain is RELT-like protein 1 (288 aa).

Positions 1–23 (MAPPAASGIPSIAPSLGPTAVWL) are cleaved as a signal peptide. Topologically, residues 24 to 57 (GNRSDLGDVQALASRDLPTTTVTAGNNNKPEHLE) are extracellular. Asparagine 25 is a glycosylation site (N-linked (GlcNAc...) asparagine). Residues 58 to 78 (YVAFVLVPVFFIMGLLGILIC) form a helical membrane-spanning segment. At 79–288 (HVLKKKGYRC…EGTQERRSSE (210 aa)) the chain is on the cytoplasmic side. Disordered stretches follow at residues 145–172 (FEPE…GAAS) and 237–288 (HKSN…RSSE). Residues 152-172 (SPNAPGSPTSPGSPLSPGAAS) are compositionally biased toward low complexity. Basic and acidic residues predominate over residues 237 to 246 (HKSNSKERKS).

The protein belongs to the RELT family.

The protein resides in the cell membrane. This chain is RELT-like protein 1 (RELL1), found in Gallus gallus (Chicken).